The sequence spans 341 residues: HTH-type sugar sensing transcriptional regulator TrmBL1 (341 aa).

The H-T-H motif DNA-binding region spans 32 to 53 (SKATDVTKESGIPHTRIYDVLS).

It belongs to the transcriptional regulator TrmB family. As to quaternary structure, homotetramer. Forms homooctamers in the presence of maltotriose or maltose.

Repressor activity is regulated by binding of different sugars to TrmBL1. Binding of maltose and maltotriose results in derepression of the target genes. However, high sugar concentration results in formation of octamers with high affinity for DNA, which may prevent transcription of target genes. Functionally, global transcriptional repressor of the maltodextrin transport gene cluster (mdxE operon) and most likely of all genes encoding glycolytic enzymes. Acts by binding to the conserved TGM (Thermococcales-Glycolytic-Motif) sequences in their promoter region. Can also interact with non-TGM sequences. The polypeptide is HTH-type sugar sensing transcriptional regulator TrmBL1 (trmBL1) (Pyrococcus furiosus (strain ATCC 43587 / DSM 3638 / JCM 8422 / Vc1)).